We begin with the raw amino-acid sequence, 910 residues long: Lysine-specific demethylase 7 homolog (910 aa).

Positions 1–11 (MDGNDINIQKN) are enriched in polar residues. Disordered stretches follow at residues 1–58 (MDGN…HQTP), 103–162 (NKMG…GSEP), and 183–212 (QEEL…DRCG). Basic and acidic residues predominate over residues 25–35 (QHSDHKNHESA). Positions 43–58 (YTASQPALSSTEHQTP) are enriched in polar residues. The segment covering 118–130 (PKSEPKIEPHVTD) has biased composition (basic and acidic residues). Polar residues predominate over residues 150-160 (ESNQNYVSNGS). Basic and acidic residues predominate over residues 200 to 210 (PEQKTPKESDR). The PHD-type zinc finger occupies 208–290 (SDRCGGCGKF…KFFCPKCVPH (83 aa)). The region spanning 441 to 612 (SDNNEMKEIA…MQMRVYHLEN (172 aa)) is the JmjC domain. Substrate is bound by residues 505-510 (TDFHVD), Tyr518, Lys525, and His580. Positions 508 and 510 each coordinate Fe cation. His580 lines the Fe cation pocket. Disordered regions lie at residues 712-790 (KIQN…PSEV) and 864-910 (EAVH…KLKM). The span at 748–757 (YKKKYTKKAK) shows a compositional bias: basic residues. The segment covering 758–780 (KDNDDAPKVKKAKKEEVPEEKVP) has biased composition (basic and acidic residues).

This sequence belongs to the JHDM1 histone demethylase family. JHDM1D subfamily. Fe(2+) is required as a cofactor. Mainly expressed in neurons. Also weakly expressed in some muscle, intestinal and hypodermal cells.

The protein resides in the nucleus. Its activity is regulated as follows. Competitively inhibited by 2-hydroxyglutarate. Its function is as follows. Histone demethylase required for nervous system development. Specifically demethylates dimethylated 'Lys-9', 'Lys-23' and 'Lys-27' (H3K9me2, H3K23me2 and H3K27me2, respectively) of histone H3, thereby playing a central role in histone code. Promotes mitochondrial stress-induced longevity. The polypeptide is Lysine-specific demethylase 7 homolog (jmjd-1.2) (Caenorhabditis elegans).